The chain runs to 292 residues: Nitrogenase iron protein 2 (292 aa).

ATP is bound at residue G8–S15. A [4Fe-4S] cluster-binding site is contributed by C106. R109 carries the post-translational modification ADP-ribosylarginine; by dinitrogenase reductase ADP-ribosyltransferase. C142 is a binding site for [4Fe-4S] cluster.

The protein belongs to the NifH/BchL/ChlL family. As to quaternary structure, homodimer. [4Fe-4S] cluster is required as a cofactor. The reversible ADP-ribosylation of Arg-109 inactivates the nitrogenase reductase and regulates nitrogenase activity.

It carries out the reaction N2 + 8 reduced [2Fe-2S]-[ferredoxin] + 16 ATP + 16 H2O = H2 + 8 oxidized [2Fe-2S]-[ferredoxin] + 2 NH4(+) + 16 ADP + 16 phosphate + 6 H(+). Functionally, the key enzymatic reactions in nitrogen fixation are catalyzed by the nitrogenase complex, which has 2 components: the iron protein and the molybdenum-iron protein. The polypeptide is Nitrogenase iron protein 2 (nifH2) (Methanothermococcus thermolithotrophicus (Methanococcus thermolithotrophicus)).